A 255-amino-acid polypeptide reads, in one-letter code: Electron transfer flavoprotein subunit beta (255 aa).

N-acetylalanine is present on Ala-2. Residues Ala-9, 39 to 42 (NPFC), Cys-66, and 123 to 134 (GKQAIDDDCNQT) contribute to the AMP site. Positions 183–205 (ADLRLNEPRYATLPNIMKAKKKK) are recognition loop. Residue Lys-200 is modified to N6,N6,N6-trimethyllysine; by ETFBKMT; alternate. Lys-200 bears the N6-acetyllysine; alternate mark. Lys-200 is modified (N6-methyllysine; alternate). The residue at position 203 (Lys-203) is an N6,N6,N6-trimethyllysine; by ETFBKMT. An N6-acetyllysine; alternate modification is found at Lys-210. An N6-succinyllysine; alternate modification is found at Lys-210. Residues Ser-223 and Ser-226 each carry the phosphoserine modification. Lys-238 is subject to N6-acetyllysine. Lys-248 carries the N6-acetyllysine; alternate modification. Position 248 is an N6-succinyllysine; alternate (Lys-248).

It belongs to the ETF beta-subunit/FixA family. In terms of assembly, heterodimer composed of ETFA and ETFB. Identified in a complex that contains ETFA, ETFB and ETFRF1. Interacts with ACADM. In terms of processing, methylated. Trimethylation at Lys-200 and Lys-203 may negatively regulate the activity in electron transfer from acyl-CoA dehydrogenases.

It localises to the mitochondrion matrix. In terms of biological role, heterodimeric electron transfer flavoprotein that accepts electrons from several mitochondrial dehydrogenases, including acyl-CoA dehydrogenases, glutaryl-CoA and sarcosine dehydrogenase. It transfers the electrons to the main mitochondrial respiratory chain via ETF-ubiquinone oxidoreductase. Required for normal mitochondrial fatty acid oxidation and normal amino acid metabolism. ETFB binds an AMP molecule that probably has a purely structural role. The chain is Electron transfer flavoprotein subunit beta from Pongo abelii (Sumatran orangutan).